Here is a 220-residue protein sequence, read N- to C-terminus: Adenylate kinase (220 aa).

10 to 15 (GSGKST) provides a ligand contact to ATP. The segment at 30–59 (SSGDLIRKEIAEGTPLGREMQAYLARGDLI) is NMP. AMP-binding positions include Ser31, Arg36, 57–59 (DLI), 83–86 (GYPR), and Gln90. Positions 124–161 (GRRICPKCGAVYHVEFNPPKIPGRCDVCGAELVQREDD) are LID. An ATP-binding site is contributed by Arg125. The Zn(2+) site is built by Cys128 and Cys131. 134-135 (VY) is an ATP binding site. Residues Cys148 and Cys151 each coordinate Zn(2+). AMP is bound by residues Arg158 and Arg169. Residue Gly197 coordinates ATP.

This sequence belongs to the adenylate kinase family. In terms of assembly, monomer.

The protein resides in the cytoplasm. The catalysed reaction is AMP + ATP = 2 ADP. It functions in the pathway purine metabolism; AMP biosynthesis via salvage pathway; AMP from ADP: step 1/1. Catalyzes the reversible transfer of the terminal phosphate group between ATP and AMP. Plays an important role in cellular energy homeostasis and in adenine nucleotide metabolism. The sequence is that of Adenylate kinase from Pyrococcus furiosus (strain ATCC 43587 / DSM 3638 / JCM 8422 / Vc1).